The primary structure comprises 487 residues: Argininosuccinate lyase (487 aa).

This sequence belongs to the lyase 1 family. Argininosuccinate lyase subfamily.

Its subcellular location is the cytoplasm. It catalyses the reaction 2-(N(omega)-L-arginino)succinate = fumarate + L-arginine. It participates in amino-acid biosynthesis; L-arginine biosynthesis; L-arginine from L-ornithine and carbamoyl phosphate: step 3/3. The protein is Argininosuccinate lyase of Methanothrix thermoacetophila (strain DSM 6194 / JCM 14653 / NBRC 101360 / PT) (Methanosaeta thermophila).